The primary structure comprises 300 residues: Ubiquinone biosynthesis protein COQ4, mitochondrial (300 aa).

Zn(2+) is bound by residues H173, D174, H177, and E189.

Belongs to the COQ4 family. Component of a multi-subunit COQ enzyme complex, composed of at least COQ3, COQ4, COQ5, COQ6, COQ7 and COQ9. Requires Zn(2+) as cofactor.

Its subcellular location is the mitochondrion inner membrane. The catalysed reaction is a 4-hydroxy-3-methoxy-5-(all-trans-polyprenyl)benzoate + H(+) = a 2-methoxy-6-(all-trans-polyprenyl)phenol + CO2. Its pathway is cofactor biosynthesis; ubiquinone biosynthesis. In terms of biological role, lyase that catalyzes the C1-decarboxylation of 4-hydroxy-3-methoxy-5-(all-trans-polyprenyl)benzoic acid into 2-methoxy-6-(all-trans-polyprenyl)phenol during ubiquinone biosynthesis. This chain is Ubiquinone biosynthesis protein COQ4, mitochondrial, found in Cryptococcus neoformans var. neoformans serotype D (strain JEC21 / ATCC MYA-565) (Filobasidiella neoformans).